A 441-amino-acid chain; its full sequence is Probable magnesium transporter NIPA8 (441 aa).

At 1–4 the chain is on the extracellular side; that stretch reads MGEW. A helical membrane pass occupies residues 5–25; it reads VIGAFINIFGSVAINFGTNLL. Topologically, residues 26-56 are cytoplasmic; sequence KLGHNERERLALQDGGGKMPLKPIIHNQTWR. A helical transmembrane segment spans residues 57–77; that stretch reads VGILVFLLGNCLNFISFGYAA. At 78 to 79 the chain is on the extracellular side; the sequence is QS. Residues 80 to 100 traverse the membrane as a helical segment; sequence LLAALGSIQFVSNIAFAYVVL. The Cytoplasmic portion of the chain corresponds to 101-105; sequence NKMVT. The chain crosses the membrane as a helical span at residues 106-126; that stretch reads VKVLVATAFIVLGNVFLVAFG. Residues 127-144 lie on the Extracellular side of the membrane; sequence NHQSPVFTPEQLAEKYSN. A helical membrane pass occupies residues 145-165; that stretch reads VTFLVYCGILILIVAVHHFLY. Over 166–184 the chain is Cytoplasmic; it reads RKGEVLISTPGQEISSYWK. Residues 185 to 205 form a helical membrane-spanning segment; that stretch reads MLLPFSYAVVSGAIGSCSVLF. The Extracellular portion of the chain corresponds to 206–222; sequence AKSLSNLLRLAMSSSYQ. Residues 223 to 243 form a helical membrane-spanning segment; sequence LHSWFTYSMLLLFLSTAGFWM. The Cytoplasmic portion of the chain corresponds to 244-255; that stretch reads TRLNEGLSLYDA. The chain crosses the membrane as a helical span at residues 256-276; that stretch reads ILIVPMFQIAWTFFSICTGCI. Over 277 to 288 the chain is Extracellular; sequence YFQEFQVFDALR. Residues 289–309 form a helical membrane-spanning segment; sequence TTMFILGMMCVFIGISLLAPD. Residues 310 to 441 lie on the Cytoplasmic side of the membrane; that stretch reads DTRGNETKDN…MLEKTISSKA (132 aa). The tract at residues 313–347 is disordered; it reads GNETKDNSSSLDSIVSSSVPTEEDRLIPQSSEDGH. Over residues 320 to 330 the composition is skewed to low complexity; that stretch reads SSSLDSIVSSS. Positions 334 to 347 are enriched in basic and acidic residues; the sequence is EEDRLIPQSSEDGH.

Belongs to the NIPA (TC 2.A.7) family. Homodimer.

The protein resides in the cell membrane. The protein localises to the early endosome. Acts as a Mg(2+) transporter. Can also transport other divalent cations such as Fe(2+), Sr(2+), Ba(2+), Mn(2+) and Co(2+) but to a much less extent than Mg(2+). This chain is Probable magnesium transporter NIPA8, found in Arabidopsis thaliana (Mouse-ear cress).